Reading from the N-terminus, the 448-residue chain is Inositol polyphosphate 5-phosphatase K (448 aa).

The interval 16–318 is catalytic; it reads IHVVTWNVAS…SDHKPVSGTF (303 aa). The tract at residues 318–448 is required for interaction with GPR78 and PAK1; sequence FDLELKPLVS…DPLGEAQPQI (131 aa). Positions 321 to 448 are required for ruffle localization; that stretch reads ELKPLVSAPL…DPLGEAQPQI (128 aa).

Belongs to the inositol 1,4,5-trisphosphate 5-phosphatase type II family. As to quaternary structure, interacts with GPR78; necessary for INPP5K localization at the endoplasmic reticulum. Interacts with PAK1; competes with GPR78. Ubiquitously expressed with highest levels in skeletal muscle, heart and kidney.

It is found in the endoplasmic reticulum. The protein resides in the cytoplasm. It catalyses the reaction 1D-myo-inositol 1,4,5-trisphosphate + H2O = 1D-myo-inositol 1,4-bisphosphate + phosphate. The catalysed reaction is 1D-myo-inositol 1,3,4,5-tetrakisphosphate + H2O = 1D-myo-inositol 1,3,4-trisphosphate + phosphate. The enzyme catalyses a 1,2-diacyl-sn-glycero-3-phospho-(1D-myo-inositol-4,5-bisphosphate) + H2O = a 1,2-diacyl-sn-glycero-3-phospho-(1D-myo-inositol 4-phosphate) + phosphate. It carries out the reaction a 1,2-diacyl-sn-glycero-3-phospho-(1D-myo-inositol-3,4,5-trisphosphate) + H2O = a 1,2-diacyl-sn-glycero-3-phospho-(1D-myo-inositol-3,4-bisphosphate) + phosphate. It catalyses the reaction 1,2-dioctanoyl-sn-glycero-3-phospho-(1D-myo-inositol-3,4,5-trisphosphate) + H2O = 1,2-dioctanoyl-sn-glycero-3-phospho-(1D-myo-inositol-3,4-bisphosphate) + phosphate. Inositol 5-phosphatase which acts on inositol 1,4,5-trisphosphate, inositol 1,3,4,5-tetrakisphosphate, phosphatidylinositol 4,5-bisphosphate and phosphatidylinositol 3,4,5-trisphosphate. Has 6-fold higher affinity for phosphatidylinositol 4,5-bisphosphate than for inositol 1,4,5-trisphosphate. Negatively regulates assembly of the actin cytoskeleton. Controls insulin-dependent glucose uptake among inositol 3,4,5-trisphosphate phosphatases; therefore, is the specific regulator for insulin signaling in skeletal muscle. The sequence is that of Inositol polyphosphate 5-phosphatase K from Homo sapiens (Human).